The following is a 342-amino-acid chain: Inositol-tetrakisphosphate 1-kinase 5 (342 aa).

1D-myo-inositol 1,3,4-trisphosphate contacts are provided by K25 and K67. 2 residues coordinate ATP: R102 and K154. 1D-myo-inositol 1,3,4-trisphosphate is bound by residues H165 and K197. ATP-binding positions include 186 to 197 (QEFVNHGGVIFK) and S212. The Mg(2+) site is built by D283, D298, and N300. N300 provides a ligand contact to 1D-myo-inositol 1,3,4-trisphosphate.

This sequence belongs to the ITPK1 family. In terms of assembly, monomer. It depends on Mg(2+) as a cofactor. Expressed in roots, leaves, flowers, anthers and embryos.

It catalyses the reaction 1D-myo-inositol 3,4,5,6-tetrakisphosphate + ATP = 1D-myo-inositol 1,3,4,5,6-pentakisphosphate + ADP + H(+). It carries out the reaction 1D-myo-inositol 1,3,4-trisphosphate + ATP = 1D-myo-inositol 1,3,4,5-tetrakisphosphate + ADP + H(+). The catalysed reaction is 1D-myo-inositol 1,3,4-trisphosphate + ATP = 1D-myo-inositol 1,3,4,6-tetrakisphosphate + ADP + H(+). Kinase that can phosphorylate various inositol polyphosphate such as Ins(3,4,5,6)P4 or Ins(1,3,4)P3 and participates in phytic acid biosynthesis in developing seeds. Phytic acid is the primary storage form of phosphorus in cereal grains and other plant seeds. The protein is Inositol-tetrakisphosphate 1-kinase 5 (ITPK5) of Oryza sativa subsp. japonica (Rice).